Consider the following 92-residue polypeptide: MDIPQADLDLLNEKDKNELRGFISNETQRQRVQGQTHALTDSCWKKCVTSPIKTNQLDKTEAVCMADCVERFLDVNLTIMAHVQKITRGGSK.

The Twin CX3C motif signature appears at C43–C68. Intrachain disulfides connect C43/C68 and C47/C64.

This sequence belongs to the small Tim family. In terms of assembly, heterohexamer; composed of 3 copies of tim8 and 3 copies of tim13, named soluble 70 kDa complex. Associates with the TIM22 complex, whose core is composed of tim22 and tim54. Interacts with the transmembrane regions of multi-pass transmembrane proteins in transit.

It is found in the mitochondrion inner membrane. Mitochondrial intermembrane chaperone that participates in the import and insertion of some multi-pass transmembrane proteins into the mitochondrial inner membrane. Also required for the transfer of beta-barrel precursors from the TOM complex to the sorting and assembly machinery (SAM complex) of the outer membrane. Acts as a chaperone-like protein that protects the hydrophobic precursors from aggregation and guide them through the mitochondrial intermembrane space. The tim8-tim13 complex is non essential and only mediates the import of few proteins, while the predominant tim9-tim10 70 kDa complex is crucial and mediates the import of much more proteins. This is Mitochondrial import inner membrane translocase subunit tim8 (tim8) from Neurospora crassa (strain ATCC 24698 / 74-OR23-1A / CBS 708.71 / DSM 1257 / FGSC 987).